We begin with the raw amino-acid sequence, 263 residues long: Superoxide dismutase [Fe] 3, chloroplastic (263 aa).

Residues Met1 to Arg41 constitute a chloroplast transit peptide. The Fe cation site is built by His74, His127, Asp211, and His215.

It belongs to the iron/manganese superoxide dismutase family. As to quaternary structure, homodimer. Heterodimer with FSD2. Interacts with MRL7. Fe cation serves as cofactor.

The protein resides in the plastid. It localises to the chloroplast thylakoid. It catalyses the reaction 2 superoxide + 2 H(+) = H2O2 + O2. Activated by cpn20/cpn21 (in vitro). Destroys superoxide anion radicals which are normally produced within the cells and which are toxic to biological systems. Plays important role in chloroplast development, particularly in the maintenance of thylakoids membranes. Seems to act as a heterodimer with FSD2. This is Superoxide dismutase [Fe] 3, chloroplastic from Arabidopsis thaliana (Mouse-ear cress).